Reading from the N-terminus, the 235-residue chain is Large ribosomal subunit protein uL1 (235 aa).

Belongs to the universal ribosomal protein uL1 family. In terms of assembly, part of the 50S ribosomal subunit.

Its function is as follows. Binds directly to 23S rRNA. The L1 stalk is quite mobile in the ribosome, and is involved in E site tRNA release. Functionally, protein L1 is also a translational repressor protein, it controls the translation of the L11 operon by binding to its mRNA. In Renibacterium salmoninarum (strain ATCC 33209 / DSM 20767 / JCM 11484 / NBRC 15589 / NCIMB 2235), this protein is Large ribosomal subunit protein uL1.